A 254-amino-acid polypeptide reads, in one-letter code: MLEKFSLEGKVALVTGCKRGIGKGIALGLAEAGADIIGVSASLALEGSDVENEVKALGRNFKGYQCDFSDRDALYAFIKEVKADFPKIDILVNNAGTILRAPAAEHGDDLWDKVIDVNLNSQFILSREIGKEMVARQSGKIIFTASLLTFQGGITVPGYAASKGAIGQLVMALSNEWAGKGVNVNAIAPGYIDTDNTQALREDSERSAAILGRIPQGRWGNPDDFKGPAVFLASDAASYVNGAILLVDGGWMGR.

Tyr-159 serves as the catalytic Proton acceptor.

This sequence belongs to the short-chain dehydrogenases/reductases (SDR) family.

The catalysed reaction is 2-dehydro-3-deoxy-D-gluconate + NAD(+) = 3-deoxy-D-glycero-2,5-hexodiulosonate + NADH + H(+). Its function is as follows. Involved in the degradation of 3,6-anhydro-L-galactose, which is the major monomeric sugar of red macroalgae. Catalyzes the fourth step of the pathway, the reduction of 3-deoxy-D-glycero-2,5-hexodiulosonate (L-DDGal) to 2-dehydro-3-deoxy-D-gluconate (KDG). The chain is 2-dehydro-3-deoxy-D-gluconate 5-dehydrogenase from Pseudoalteromonas atlantica (strain T6c / ATCC BAA-1087).